A 175-amino-acid polypeptide reads, in one-letter code: R-phycoerythrin subunit beta (175 aa).

Cys82 lines the (2R,3E)-phycoerythrobilin pocket.

It belongs to the phycobiliprotein family. As to quaternary structure, homodimer. Post-translationally, contains one covalently linked phycoerythrobilin chromophore.

Green-light absorbing phycoerythrin of unknown function. This chain is R-phycoerythrin subunit beta (cpeB), found in Prochlorococcus marinus subsp. pastoris (strain CCMP1986 / NIES-2087 / MED4).